Reading from the N-terminus, the 326-residue chain is Serpentine receptor class gamma-14 (326 aa).

7 consecutive transmembrane segments (helical) span residues 36 to 56 (QIIYIITGIFLNSAVLGTILW), 67 to 83 (FFTLFSVDCIANISILI), 115 to 135 (IIMLLTHHVSICKSLLQVLLV), 156 to 176 (LKYVISAVFLIPFCADWNIAI), 204 to 224 (FQLVFIIIALSFTFICTAITL), 243 to 263 (VIISIGFTFKVLFQIYYSFFF), and 274 to 294 (GFSFLALDFLTVGSPIVMICV).

Belongs to the nematode receptor-like protein srg family.

The protein localises to the membrane. This chain is Serpentine receptor class gamma-14 (srg-14), found in Caenorhabditis elegans.